Reading from the N-terminus, the 332-residue chain is Fe(3+) dicitrate transport system permease protein FecC (332 aa).

At 1–7 (MTAIKHP) the chain is on the cytoplasmic side. A helical membrane pass occupies residues 8–28 (VLLWGLPVAALIIIFWLSLFC). Residues 29-64 (YSAIPVSGADATRALLPGHTPTLPEALVQNLRLPRS) lie on the Periplasmic side of the membrane. A helical membrane pass occupies residues 65 to 85 (LVAVLIGASLALAGTLLQTLT). Topologically, residues 86–100 (HNPMASPSLLGINSG) are cytoplasmic. The helical transmembrane segment at 101–121 (AALAMALTSALSPTPIAGYSL) threads the bilayer. Residue serine 122 is a topological domain, periplasmic. A helical membrane pass occupies residues 123-143 (FIAACGGGVSWLLVMTAGGGF). The Cytoplasmic portion of the chain corresponds to 144 to 151 (RHTHDRNK). A helical membrane pass occupies residues 152–172 (LILAGIALSAFCMGLTRITLL). The Periplasmic segment spans residues 173 to 199 (LAEDHAYGIFYWLAGGVSHARWQDVWQ). A helical membrane pass occupies residues 200–220 (LLPVVVTAVPVVLLLANQLNL). Over 221–244 (LNLSDSTAHTLGVNLTRLRLVINM) the chain is Cytoplasmic. Residues 245–265 (LVLLLVGACVSVAGPVAFIGL) form a helical membrane-spanning segment. The Periplasmic portion of the chain corresponds to 266–307 (LVPHLARFWAGFDQRNVLPVSMLLGATLMLLADVLARALAFP). The helical transmembrane segment at 308 to 328 (GDLPAGAVLALIGSPCFVWLV) threads the bilayer. Over 329–332 (RRRG) the chain is Cytoplasmic.

The protein belongs to the binding-protein-dependent transport system permease family. FecCD subfamily. In terms of assembly, the complex is composed of two ATP-binding proteins (FecE), two transmembrane proteins (FecC and FecD) and a solute-binding protein (FecB). Interacts with FecB.

The protein resides in the cell inner membrane. Part of the ABC transporter complex FecBCDE involved in citrate-dependent Fe(3+) uptake. Probably responsible for the translocation of the substrate across the membrane. The protein is Fe(3+) dicitrate transport system permease protein FecC of Escherichia coli (strain K12).